Consider the following 188-residue polypeptide: Phosphatidylcholine-sterol acyltransferase (188 aa).

A glycan (N-linked (GlcNAc...) asparagine) is linked at N20. H169 serves as the catalytic Charge relay system.

This sequence belongs to the AB hydrolase superfamily. Lipase family. As to expression, detected in blood plasma (at protein level).

It is found in the secreted. The catalysed reaction is a sterol + a 1,2-diacyl-sn-glycero-3-phosphocholine = a sterol ester + a 1-acyl-sn-glycero-3-phosphocholine. It catalyses the reaction a 1-O-alkyl-2-acetyl-sn-glycero-3-phosphocholine + H2O = a 1-O-alkyl-sn-glycero-3-phosphocholine + acetate + H(+). It carries out the reaction a 1-hexadecanoyl-2-acyl-sn-glycero-3-phosphocholine + (24S)-hydroxycholesterol = (24S)-24-hydroxycholesterol ester + 1-hexadecanoyl-sn-glycero-3-phosphocholine. The enzyme catalyses (24S)-hydroxycholesterol + 1-hexadecanoyl-2-(9Z,12Z-octadecadienoyl)-sn-glycero-3-phosphocholine = (24S)-hydroxycholesterol 3-linoleoate + 1-hexadecanoyl-sn-glycero-3-phosphocholine. The catalysed reaction is 1-hexadecanoyl-2-(5Z,8Z,11Z,14Z-eicosatetraenoyl)-sn-glycero-3-phosphocholine + cholesterol = cholesteryl (5Z,8Z,11Z,14Z)-eicosatetraenoate + 1-hexadecanoyl-sn-glycero-3-phosphocholine. It catalyses the reaction 1-hexadecanoyl-2-(9Z-octadecenoyl)-sn-glycero-3-phosphocholine + cholesterol = cholesteryl (9Z-octadecenoate) + 1-hexadecanoyl-sn-glycero-3-phosphocholine. It carries out the reaction 1-hexadecanoyl-2-(8Z,11Z,14Z-eicosatrienoyl)-sn-glycero-3-phosphocholine + cholesterol = cholesteryl (8Z,11Z,14Z)-eicosatrienoate + 1-hexadecanoyl-sn-glycero-3-phosphocholine. The enzyme catalyses 1-hexadecanoyl-2-(5Z,8Z,11Z-eicosatrienoyl)-sn-glycero-3-phosphocholine + cholesterol = cholesteryl (5Z,8Z,11Z)-eicosatrienoate + 1-hexadecanoyl-sn-glycero-3-phosphocholine. The catalysed reaction is 1-hexadecanoyl-2-(5Z,8Z,11Z,14Z,17Z-eicosapentaenoyl)-sn-glycero-3-phosphocholine + cholesterol = (5Z,8Z,11Z,14Z,17Z-eicosapentaenoyl)-cholesterol + 1-hexadecanoyl-sn-glycero-3-phosphocholine. It catalyses the reaction 1-hexadecanoyl-2-(9Z,12Z-octadecadienoyl)-sn-glycero-3-phosphocholine + cholesterol = cholesteryl (9Z,12Z)-octadecadienoate + 1-hexadecanoyl-sn-glycero-3-phosphocholine. It carries out the reaction 1-hexadecanoyl-2-(6Z,9Z,12Z-octadecatrienoyl)-sn-glycero-3-phosphocholine + cholesterol = (6Z,9Z,12Z-octadecatrienoyl)-cholesterol + 1-hexadecanoyl-sn-glycero-3-phosphocholine. The enzyme catalyses 1-hexadecanoyl-2-(11Z,14Z,17Z-eicosatrienoyl)-sn-glycero-3-phosphocholine + cholesterol = (11Z,14Z,17Z-eicosatrienoyl)-cholesterol + 1-hexadecanoyl-sn-glycero-3-phosphocholine. The catalysed reaction is 1-hexadecanoyl-2-(9Z,12Z,15Z-octadecatrienoyl)-sn-glycero-3-phosphocholine + cholesterol = (9Z,12Z,15Z-octadecatrienoyl)-cholesterol + 1-hexadecanoyl-sn-glycero-3-phosphocholine. It catalyses the reaction 1-hexadecanoyl-2-(9Z,12Z-octadecadienoyl)-sn-glycero-3-phosphocholine + H2O = (9Z,12Z)-octadecadienoate + 1-hexadecanoyl-sn-glycero-3-phosphocholine + H(+). It carries out the reaction 1-hexadecanoyl-2-(5Z,8Z,11Z,14Z-eicosatetraenoyl)-sn-glycero-3-phosphocholine + H2O = 1-hexadecanoyl-sn-glycero-3-phosphocholine + (5Z,8Z,11Z,14Z)-eicosatetraenoate + H(+). The enzyme catalyses a 1-O-alkyl-2-acetyl-sn-glycero-3-phosphocholine + 1-hexadecanoyl-sn-glycero-3-phosphocholine = 1-hexadecanoyl-2-acetyl-sn-glycero-3-phosphocholine + a 1-O-alkyl-sn-glycero-3-phosphocholine. Its function is as follows. Central enzyme in the extracellular metabolism of plasma lipoproteins. Synthesized mainly in the liver and secreted into plasma where it converts cholesterol and phosphatidylcholines (lecithins) to cholesteryl esters and lysophosphatidylcholines on the surface of high and low density lipoproteins (HDLs and LDLs). The cholesterol ester is then transported back to the liver. Also produced in the brain by primary astrocytes, and esterifies free cholesterol on nascent APOE-containing lipoproteins secreted from glia and influences cerebral spinal fluid (CSF) APOE- and APOA1 levels. Together with APOE and the cholesterol transporter ABCA1, plays a key role in the maturation of glial-derived, nascent lipoproteins. Required for remodeling high-density lipoprotein particles into their spherical forms. Has a preference for plasma 16:0-18:2 or 18:O-18:2 phosphatidylcholines. Catalyzes the hydrolysis of 1-O-alkyl-2-acetyl-sn-glycero-3-phosphocholine (platelet-activating factor or PAF) to 1-O-alkyl-sn-glycero-3-phosphocholine (lyso-PAF). Also catalyzes the transfer of the acetate group from PAF to 1-hexadecanoyl-sn-glycero-3-phosphocholine forming lyso-PAF. Catalyzes the esterification of (24S)-hydroxycholesterol (24(S)OH-C), also known as cerebrosterol to produce 24(S)OH-C monoesters. The polypeptide is Phosphatidylcholine-sterol acyltransferase (LCAT) (Sus scrofa (Pig)).